We begin with the raw amino-acid sequence, 329 residues long: MIKEWENHFQQYKSQRCGYPKAQEGTPAEGEQNSRKPSRICSDNHPWVVQDFPHHKEDLCTPSPLGIWTAFYKSDPRIALGKYSPMEQEIQHLGGVHTRAARRFLVEKQYKEWRMLRELQKQSADYKRAIELGRDPSSYAVCGPPEKIWTAKVSVPAEEFQTPHREVTGIKKHIKRMQLARALENKQSSTDIGRLSPKTDKFSEEGEDDDTDSNDKANRGEKGEAKFEPTNKREVILNVAFKSEETKSCVVCHRNDRKTFLPVKRPERRITGLTNRNLFPITGFPGDLMLMNQDFVSKGIHPSDAIKIYWLPEEDLFKGRKQRPACCPH.

Disordered stretches follow at residues 16-41 (RCGYPKAQEGTPAEGEQNSRKPSRIC) and 183-229 (LENK…KFEP). The segment covering 213 to 229 (SNDKANRGEKGEAKFEP) has biased composition (basic and acidic residues).

As to expression, expressed in testis and epididymis. Expressed at lower levels in ovary.

Functionally, dispensable for normal development and fertility. This is an uncharacterized protein from Mus musculus (Mouse).